Here is a 99-residue protein sequence, read N- to C-terminus: MDFQKLAQELKKMQNTLSKKQKEFEEKVFDFDYKGYVLVKIKGDLNIEAIEIKTEIVDPEDKETLQDILRAAINEAISITCKERDAIMNATIPKGTGLF.

This sequence belongs to the YbaB/EbfC family. As to quaternary structure, homodimer.

It localises to the cytoplasm. It is found in the nucleoid. Binds to DNA and alters its conformation. May be involved in regulation of gene expression, nucleoid organization and DNA protection. This Ureaplasma parvum serovar 3 (strain ATCC 27815 / 27 / NCTC 11736) protein is Nucleoid-associated protein UPA3_0088.